We begin with the raw amino-acid sequence, 957 residues long: Outer kinetochore KNL1 complex subunit knl-1 (957 aa).

The stretch at 87–90 is repeat 1; sequence MDIT. The segment at 87–393 is 8 X 4 AA repeats of M-[D/E]-[I/L/M]-[S/T]; sequence MDITGLNSTP…NFDDVAMDIT (307 aa). The segment at 89-111 is disordered; it reads ITGLNSTPVTPKTQTPFNGSMDM. Residues 91 to 106 show a composition bias toward polar residues; the sequence is GLNSTPVTPKTQTPFN. 7 consecutive repeat copies span residues 109-112, 206-209, 251-254, 282-285, 326-329, 367-370, and 390-393. Residues 476 to 504 are disordered; it reads SLQQSSMRMSTTITEDVTASKNPESSTIS. Positions 830–950 form a coiled coil; that stretch reads KFAKESNVEI…RKKKEEMVER (121 aa).

As to quaternary structure, component of the KNL1 complex composed of knl-1 and kbp-5. Part of the ten-subunit outer kinetochore KMN network that includes the KNL1, MIS12 and NDC80 complexes. Interacts with the protein phosphatase 1 (PP1) catalytic subunit gsp-1; the interaction is direct. Interacts with the protein phosphatase 1 (PP1) catalytic subunit gsp-2; the interaction is direct. Interacts with the MIS12 complex subunits kbp-1, kbp-2 and mis-12. Interacts with the NDC80 complex components ndc-80 and him-10. Interacts with knl-3. Interacts with kbp-3. Interacts with kbp-4. Interacts with kbp-5.

The protein resides in the cytoplasm. It is found in the cell cortex. The protein localises to the chromosome. Its subcellular location is the centromere. It localises to the kinetochore. Functionally, acts as a component of the outer kinetochore KNL1 complex that serves as a docking point for spindle assembly checkpoint components and mediates microtubule-kinetochore interactions. Kinetochores, consisting of a centromere-associated inner segment and a microtubule-contacting outer segment, play a crucial role in chromosome segregation by mediating the physical connection between centromeric DNA and spindle microtubules. The outer kinetochore is made up of the ten-subunit KMN network, comprising the MIS12, NDC80 and KNL1 complexes, and auxiliary microtubule-associated components; together they connect the outer kinetochore with the inner kinetochore, bind microtubules, and mediate interactions with mitotic checkpoint proteins that delay anaphase until chromosomes are bioriented on the spindle. Binds the protein phosphatase 1 catalytic subunits gsp-1 and gsp-2, which has a role in delaying formation of load-bearing kinetochore-microtubule attachments. Required for the recruitment of spindle-assembly checkpoint components bub-1 and mdf-1/2 to unattached kinetochores. Binds microtubules which plays a role in silencing of the spindle assembly checkpoint, but not the formation of load-bearing microtubule-kinetochore attachments. Has a role in the correct localization of the spindly-like protein spdl-1 and the RZZ complex that is composed of rod-1, czw-1 and zwl-1 to kinetochores. The polypeptide is Outer kinetochore KNL1 complex subunit knl-1 (Caenorhabditis briggsae).